The sequence spans 202 residues: Heat shock 22 kDa protein, mitochondrial (202 aa).

Residues 1–31 (MASSLALKRFLSSGLLSSSFLRPVASSASRS) constitute a mitochondrion transit peptide. The 109-residue stretch at 94–202 (VLSAASRRGW…RNNVINVKVD (109 aa)) folds into the sHSP domain.

The protein belongs to the small heat shock protein (HSP20) family.

It localises to the mitochondrion. The polypeptide is Heat shock 22 kDa protein, mitochondrial (HSP22) (Pisum sativum (Garden pea)).